A 155-amino-acid chain; its full sequence is SsrA-binding protein (155 aa).

It belongs to the SmpB family.

It localises to the cytoplasm. In terms of biological role, required for rescue of stalled ribosomes mediated by trans-translation. Binds to transfer-messenger RNA (tmRNA), required for stable association of tmRNA with ribosomes. tmRNA and SmpB together mimic tRNA shape, replacing the anticodon stem-loop with SmpB. tmRNA is encoded by the ssrA gene; the 2 termini fold to resemble tRNA(Ala) and it encodes a 'tag peptide', a short internal open reading frame. During trans-translation Ala-aminoacylated tmRNA acts like a tRNA, entering the A-site of stalled ribosomes, displacing the stalled mRNA. The ribosome then switches to translate the ORF on the tmRNA; the nascent peptide is terminated with the 'tag peptide' encoded by the tmRNA and targeted for degradation. The ribosome is freed to recommence translation, which seems to be the essential function of trans-translation. The protein is SsrA-binding protein of Bordetella bronchiseptica (strain ATCC BAA-588 / NCTC 13252 / RB50) (Alcaligenes bronchisepticus).